The chain runs to 367 residues: Probable butyrate kinase (367 aa).

The protein belongs to the acetokinase family.

Its subcellular location is the cytoplasm. It catalyses the reaction butanoate + ATP = butanoyl phosphate + ADP. The sequence is that of Probable butyrate kinase from Exiguobacterium sibiricum (strain DSM 17290 / CCUG 55495 / CIP 109462 / JCM 13490 / 255-15).